The primary structure comprises 201 residues: MAIILPELPYAYDALEPQFDAETMTLHHDKHHATYVANTDAALEKHPEIGENLEELLADVPKIPEDIRQALINNGGGHLNHALFWELLSPEKQDVTPDVAQAIDDAFGSFDAFKEQFTAAATGRFGSGWAWLVVNKEGQLEITSTANQDTPISEGKKPILALDVWEHAYYLNYRNVRPNYIKAFFEIINWKKVSALYQAAK.

Mn(2+) contacts are provided by His-27, His-81, Asp-163, and His-167.

Belongs to the iron/manganese superoxide dismutase family. Homodimer. Mn(2+) is required as a cofactor.

The protein resides in the secreted. It carries out the reaction 2 superoxide + 2 H(+) = H2O2 + O2. Its function is as follows. Destroys superoxide anion radicals which are normally produced within the cells and which are toxic to biological systems. In Streptococcus pyogenes, this protein is Superoxide dismutase [Mn] (sodA).